A 578-amino-acid chain; its full sequence is SCARECROW-LIKE protein 7 (578 aa).

Residues 18 to 29 (VIQQQQQQQQQQ) are compositionally biased toward low complexity. Disordered regions lie at residues 18–84 (VIQQ…LAYG) and 146–173 (PPPPVPSPPPTHAAATATATAATAAPRP). The segment covering 49–61 (PHHHQQKHHHHHQ) has biased composition (basic residues). Low complexity predominate over residues 62–74 (QMPAMPQAPPSSH). The span at 146–156 (PPPPVPSPPPT) shows a compositional bias: pro residues. Over residues 157–173 (HAAATATATAATAAPRP) the composition is skewed to low complexity. The GRAS domain occupies 198–578 (SADASCSAPI…RPLLTVSAWR (381 aa)). The leucine repeat I (LRI) stretch occupies residues 205 to 264 (APILQSLLSCSRAAATDPGLAAAELASVRAAATDAGDPSERLAFYFADALSRRLACGTGA). A VHIID region spans residues 283–349 (YKTLNDACPY…GKPTRIRITG (67 aa)). A VHIID motif is present at residues 314-318 (IHIVD). The segment at 365–397 (ATNTRLRDFAKLLGVDFEFVPLLRPVHELNKSD) is leucine repeat II (LRII). The interval 406-497 (VAVNFMLQLY…RWMFGERIQR (92 aa)) is PFYRE. Positions 414 to 418 (LYHLL) match the LXXLL motif motif. An SAW region spans residues 500–578 (GPEEGADRTE…RPLLTVSAWR (79 aa)).

It belongs to the GRAS family. In terms of assembly, homodimer.

The protein localises to the nucleus. Functionally, probable transcription factor involved in plant development. Involved in environmental abiotic stress resistance. May increase the expression of stress-responsive genes. Binds DNA in vitro. In Oryza sativa subsp. japonica (Rice), this protein is SCARECROW-LIKE protein 7.